We begin with the raw amino-acid sequence, 816 residues long: Leucine--tRNA ligase (816 aa).

A 'HIGH' region motif is present at residues 40-51; the sequence is SYPSGSQLHAGH. Residues 576 to 580 carry the 'KMSKS' region motif; it reads KMSKS. Lys-579 contacts ATP.

Belongs to the class-I aminoacyl-tRNA synthetase family.

The protein localises to the cytoplasm. The catalysed reaction is tRNA(Leu) + L-leucine + ATP = L-leucyl-tRNA(Leu) + AMP + diphosphate. This Clostridium perfringens (strain SM101 / Type A) protein is Leucine--tRNA ligase.